The following is a 958-amino-acid chain: Nuclear factor NF-kappa-B p100 subunit (958 aa).

One can recognise an RHD domain in the interval 40-230 (LLMSYLSIIE…DPIHDSKSPG (191 aa)). Residues 343–347 (RKRRK) carry the Nuclear localization signal motif. Disordered regions lie at residues 350-374 (PTFN…SFGQ) and 411-442 (CSAT…QTDS). The interval 352–390 (FNNHFYGGGSPMGGAPPGSSFGQGGGSNINYQYTGMNSA) is GRR. A compositionally biased stretch (gly residues) spans 357 to 374 (YGGGSPMGGAPPGSSFGQ). Residues 412–425 (SATNSSEKNQQPSI) are compositionally biased toward polar residues. 6 ANK repeats span residues 500 to 529 (NGDT…SIPN), 539 to 568 (LQQT…DPTI), 572 to 603 (YGNS…QKNL), 610 to 639 (HGLS…NVNS), 644 to 674 (SGKS…DINA), and 678 to 707 (GGNT…NVLS). Positions 705-766 (VLSENDEPVN…SAEEMHRREQ (62 aa)) are disordered. The segment covering 724–734 (SESDSDVQMDT) has biased composition (acidic residues). Positions 753–766 (ECEHSAEEMHRREQ) are enriched in basic and acidic residues. Positions 815-901 (VNVLALETNT…EGVELLCKSE (87 aa)) constitute a Death domain. A compositionally biased stretch (basic and acidic residues) spans 904–916 (AKHHSPAESKNDS). Positions 904–958 (AKHHSPAESKNDSAYESQSMEVDQSSGNLMDDSQKQTIPVSAAELCPTTEPTIGQ) are disordered. The span at 917 to 931 (AYESQSMEVDQSSGN) shows a compositional bias: polar residues.

As to quaternary structure, active NF-kappa-B is a heterodimer of an about 52 kDa DNA-binding subunit and the weak DNA-binding subunit p65. Two heterodimers might form a labile tetramer. Post-translationally, while translation occurs, the particular unfolded structure after the GRR repeat promotes the generation of p52 making it an acceptable substrate for the proteasome. This process is known as cotranslational processing. The processed form is active and the unprocessed form acts as an inhibitor (I kappa B-like), being able to form cytosolic complexes with NF-kappa B, trapping it in the cytoplasm. Complete folding of the region downstream of the GRR repeat precludes processing. Constitutive processing is tightly suppressed by its C-terminal processing inhibitory domain, named PID, which contains the death domain. As to expression, expressed in spleen.

Its subcellular location is the nucleus. It is found in the cytoplasm. In terms of biological role, appears to have dual functions such as cytoplasmic retention of attached NF-kappa-B proteins and generation of p52 by a cotranslational processing. The proteasome-mediated process ensures the production of both p52 and p100 and preserves their independent function. p52 binds to the kappa-B consensus sequence 5'-GGRNNYYCC-3', located in the enhancer region of genes involved in immune response and acute phase reactions. In concert with RELB, may play a role in the regulation of the circadian clock. The polypeptide is Nuclear factor NF-kappa-B p100 subunit (nfkb2) (Xenopus laevis (African clawed frog)).